The following is a 126-amino-acid chain: NADH-quinone oxidoreductase subunit A (126 aa).

The next 3 helical transmembrane spans lie at 14 to 34, 66 to 86, and 96 to 116; these read FLYF…TSWF, FYLI…LYAW, and IGFV…FYLV.

Belongs to the complex I subunit 3 family. As to quaternary structure, NDH-1 is composed of 13 different subunits. Subunits NuoA, H, J, K, L, M, N constitute the membrane sector of the complex.

The protein resides in the cell membrane. It catalyses the reaction a quinone + NADH + 5 H(+)(in) = a quinol + NAD(+) + 4 H(+)(out). Its function is as follows. NDH-1 shuttles electrons from NADH, via FMN and iron-sulfur (Fe-S) centers, to quinones in the respiratory chain. The immediate electron acceptor for the enzyme in this species is believed to be ubiquinone. Couples the redox reaction to proton translocation (for every two electrons transferred, four hydrogen ions are translocated across the cytoplasmic membrane), and thus conserves the redox energy in a proton gradient. This Buchnera aphidicola subsp. Schizaphis graminum (strain Sg) protein is NADH-quinone oxidoreductase subunit A.